An 835-amino-acid chain; its full sequence is Bifunctional uridylyltransferase/uridylyl-removing enzyme (835 aa).

Residues Met1–Pro316 form a uridylyltransferase region. The segment at Leu317 to Val650 is uridylyl-removing. The region spanning Val431 to Trp554 is the HD domain. The tract at residues Gln610–Pro645 is disordered. Pro residues predominate over residues Pro621–Pro630. The span at Ser631 to Ala642 shows a compositional bias: low complexity. 2 consecutive ACT domains span residues Glu651–Arg736 and Val765–Thr835.

This sequence belongs to the GlnD family. The cofactor is Mg(2+).

It catalyses the reaction [protein-PII]-L-tyrosine + UTP = [protein-PII]-uridylyl-L-tyrosine + diphosphate. The enzyme catalyses [protein-PII]-uridylyl-L-tyrosine + H2O = [protein-PII]-L-tyrosine + UMP + H(+). With respect to regulation, uridylyltransferase (UTase) activity is inhibited by glutamine, while glutamine activates uridylyl-removing (UR) activity. In terms of biological role, modifies, by uridylylation and deuridylylation, the PII regulatory proteins (GlnB and homologs), in response to the nitrogen status of the cell that GlnD senses through the glutamine level. Under low glutamine levels, catalyzes the conversion of the PII proteins and UTP to PII-UMP and PPi, while under higher glutamine levels, GlnD hydrolyzes PII-UMP to PII and UMP (deuridylylation). Thus, controls uridylylation state and activity of the PII proteins, and plays an important role in the regulation of nitrogen assimilation and metabolism. The protein is Bifunctional uridylyltransferase/uridylyl-removing enzyme of Streptomyces coelicolor (strain ATCC BAA-471 / A3(2) / M145).